The sequence spans 288 residues: tRNA dimethylallyltransferase (288 aa).

17-24 (GPTASGKS) lines the ATP pocket. Residue 19–24 (TASGKS) coordinates substrate.

This sequence belongs to the IPP transferase family. In terms of assembly, monomer. Mg(2+) is required as a cofactor.

The catalysed reaction is adenosine(37) in tRNA + dimethylallyl diphosphate = N(6)-dimethylallyladenosine(37) in tRNA + diphosphate. Functionally, catalyzes the transfer of a dimethylallyl group onto the adenine at position 37 in tRNAs that read codons beginning with uridine, leading to the formation of N6-(dimethylallyl)adenosine (i(6)A). The protein is tRNA dimethylallyltransferase of Ruegeria sp. (strain TM1040) (Silicibacter sp.).